We begin with the raw amino-acid sequence, 347 residues long: UPF0324 membrane protein Atu0671 (347 aa).

10 helical membrane-spanning segments follow: residues 15 to 37 (LRWL…AAIL), 50 to 72 (WLGD…SLPV), 105 to 127 (AGGL…SYAA), 140 to 162 (LIAC…AIGA), 172 to 194 (AFTA…LLGL), 201 to 223 (IFAG…LGAV), 233 to 250 (LIRV…SVIH), 263 to 282 (MVPW…SFGL), 287 to 309 (LLSP…LGLS), and 322 to 344 (VIIA…ILLT).

It belongs to the UPF0324 family.

The protein localises to the cell membrane. The sequence is that of UPF0324 membrane protein Atu0671 from Agrobacterium fabrum (strain C58 / ATCC 33970) (Agrobacterium tumefaciens (strain C58)).